The following is an 88-amino-acid chain: MSEANLNRTLSGKVVSDKMNKTITVLVERKVKHPLYGKIMVRSKKYHVHDEANEFHTGDVVVIEECRPLSKTKAWRVVKLMQKAEQVS.

It belongs to the universal ribosomal protein uS17 family. In terms of assembly, part of the 30S ribosomal subunit.

Its function is as follows. One of the primary rRNA binding proteins, it binds specifically to the 5'-end of 16S ribosomal RNA. In Nitrosospira multiformis (strain ATCC 25196 / NCIMB 11849 / C 71), this protein is Small ribosomal subunit protein uS17.